The sequence spans 305 residues: Glycine--tRNA ligase alpha subunit (305 aa).

This sequence belongs to the class-II aminoacyl-tRNA synthetase family. As to quaternary structure, tetramer of two alpha and two beta subunits.

The protein localises to the cytoplasm. The enzyme catalyses tRNA(Gly) + glycine + ATP = glycyl-tRNA(Gly) + AMP + diphosphate. In Streptococcus suis (strain 98HAH33), this protein is Glycine--tRNA ligase alpha subunit.